The chain runs to 95 residues: uncharacterized protein (95 aa).

Residues 1–73 (MAHFKDDLQT…AQQPSMRTEL (73 aa)) are disordered. 2 stretches are compositionally biased toward polar residues: residues 42-52 (SNHSPSVQESP) and 62-73 (GSAQQPSMRTEL).

This is an uncharacterized protein from Homo sapiens (Human).